The following is a 388-amino-acid chain: Pepsin A-3 (388 aa).

The first 15 residues, 1–15 (MKWLLLLGLVALSEC), serve as a signal peptide directing secretion. The propeptide at 16–62 (IMYKVPLIRKKSLRRTLSERGLLKDFLKKHNLNPARKYFPQWKAPTL) is activation peptide. The Peptidase A1 domain maps to 76-385 (YFGTIGIGTP…DRANNQVGLA (310 aa)). The active site involves Asp94. 2 disulfides stabilise this stretch: Cys107–Cys112 and Cys268–Cys272. Asp277 is an active-site residue. A disulfide bridge links Cys311 with Cys344.

This sequence belongs to the peptidase A1 family.

The protein localises to the secreted. The catalysed reaction is Preferential cleavage: hydrophobic, preferably aromatic, residues in P1 and P1' positions. Cleaves 1-Phe-|-Val-2, 4-Gln-|-His-5, 13-Glu-|-Ala-14, 14-Ala-|-Leu-15, 15-Leu-|-Tyr-16, 16-Tyr-|-Leu-17, 23-Gly-|-Phe-24, 24-Phe-|-Phe-25 and 25-Phe-|-Tyr-26 bonds in the B chain of insulin.. Its function is as follows. Shows particularly broad specificity; although bonds involving phenylalanine and leucine are preferred, many others are also cleaved to some extent. This is Pepsin A-3 (PGA3) from Homo sapiens (Human).